We begin with the raw amino-acid sequence, 341 residues long: S-adenosylmethionine:tRNA ribosyltransferase-isomerase (341 aa).

Belongs to the QueA family. Monomer.

It localises to the cytoplasm. It catalyses the reaction 7-aminomethyl-7-carbaguanosine(34) in tRNA + S-adenosyl-L-methionine = epoxyqueuosine(34) in tRNA + adenine + L-methionine + 2 H(+). It participates in tRNA modification; tRNA-queuosine biosynthesis. Its function is as follows. Transfers and isomerizes the ribose moiety from AdoMet to the 7-aminomethyl group of 7-deazaguanine (preQ1-tRNA) to give epoxyqueuosine (oQ-tRNA). The polypeptide is S-adenosylmethionine:tRNA ribosyltransferase-isomerase (Staphylococcus epidermidis (strain ATCC 35984 / DSM 28319 / BCRC 17069 / CCUG 31568 / BM 3577 / RP62A)).